Here is a 367-residue protein sequence, read N- to C-terminus: Beta sliding clamp (367 aa).

It belongs to the beta sliding clamp family. In terms of assembly, forms a ring-shaped head-to-tail homodimer around DNA which binds and tethers DNA polymerases and other proteins to the DNA. The DNA replisome complex has a single clamp-loading complex (3 tau and 1 each of delta, delta', psi and chi subunits) which binds 3 Pol III cores (1 core on the leading strand and 2 on the lagging strand) each with a beta sliding clamp dimer. Additional proteins in the replisome are other copies of gamma, psi and chi, Ssb, DNA helicase and RNA primase.

It localises to the cytoplasm. Functionally, confers DNA tethering and processivity to DNA polymerases and other proteins. Acts as a clamp, forming a ring around DNA (a reaction catalyzed by the clamp-loading complex) which diffuses in an ATP-independent manner freely and bidirectionally along dsDNA. Initially characterized for its ability to contact the catalytic subunit of DNA polymerase III (Pol III), a complex, multichain enzyme responsible for most of the replicative synthesis in bacteria; Pol III exhibits 3'-5' exonuclease proofreading activity. The beta chain is required for initiation of replication as well as for processivity of DNA replication. The sequence is that of Beta sliding clamp (dnaN) from Proteus mirabilis.